Here is a 688-residue protein sequence, read N- to C-terminus: DNA-directed RNA polymerase subunit beta' (688 aa).

Zn(2+)-binding residues include Cys-69, Cys-71, Cys-87, and Cys-90. Mg(2+) is bound by residues Asp-497, Asp-499, and Asp-501.

This sequence belongs to the RNA polymerase beta' chain family. RpoC1 subfamily. As to quaternary structure, in plastids the minimal PEP RNA polymerase catalytic core is composed of four subunits: alpha, beta, beta', and beta''. When a (nuclear-encoded) sigma factor is associated with the core the holoenzyme is formed, which can initiate transcription. Requires Mg(2+) as cofactor. Zn(2+) is required as a cofactor.

It is found in the plastid. It localises to the chloroplast. The catalysed reaction is RNA(n) + a ribonucleoside 5'-triphosphate = RNA(n+1) + diphosphate. DNA-dependent RNA polymerase catalyzes the transcription of DNA into RNA using the four ribonucleoside triphosphates as substrates. This is DNA-directed RNA polymerase subunit beta' from Sinapis alba (White mustard).